The following is a 358-amino-acid chain: UDP-N-acetylglucosamine--N-acetylmuramyl-(pentapeptide) pyrophosphoryl-undecaprenol N-acetylglucosamine transferase (358 aa).

Residues 13–15 (TGG), N125, R161, S189, I244, and Q288 contribute to the UDP-N-acetyl-alpha-D-glucosamine site.

It belongs to the glycosyltransferase 28 family. MurG subfamily.

Its subcellular location is the cell membrane. The catalysed reaction is di-trans,octa-cis-undecaprenyl diphospho-N-acetyl-alpha-D-muramoyl-L-alanyl-D-glutamyl-meso-2,6-diaminopimeloyl-D-alanyl-D-alanine + UDP-N-acetyl-alpha-D-glucosamine = di-trans,octa-cis-undecaprenyl diphospho-[N-acetyl-alpha-D-glucosaminyl-(1-&gt;4)]-N-acetyl-alpha-D-muramoyl-L-alanyl-D-glutamyl-meso-2,6-diaminopimeloyl-D-alanyl-D-alanine + UDP + H(+). It participates in cell wall biogenesis; peptidoglycan biosynthesis. Functionally, cell wall formation. Catalyzes the transfer of a GlcNAc subunit on undecaprenyl-pyrophosphoryl-MurNAc-pentapeptide (lipid intermediate I) to form undecaprenyl-pyrophosphoryl-MurNAc-(pentapeptide)GlcNAc (lipid intermediate II). In Baumannia cicadellinicola subsp. Homalodisca coagulata, this protein is UDP-N-acetylglucosamine--N-acetylmuramyl-(pentapeptide) pyrophosphoryl-undecaprenol N-acetylglucosamine transferase.